The chain runs to 1337 residues: Aldehyde oxidase 4 (1337 aa).

One can recognise a 2Fe-2S ferredoxin-type domain in the interval 4–91; sequence DDLVFAVNGE…GCSITTSDGL (88 aa). [2Fe-2S] cluster is bound by residues cysteine 43, cysteine 48, cysteine 51, cysteine 73, cysteine 113, cysteine 116, cysteine 155, and cysteine 157. Positions 225–409 constitute an FAD-binding PCMH-type domain; sequence LDQTRYHWST…LKVHIPRWIA (185 aa). Residues 259–266, 342–346, aspartate 358, and leucine 399 contribute to the FAD site; these read LVVGNTGT and SIGGN. Mo-molybdopterin-binding residues include glutamine 771, phenylalanine 802, and arginine 915. The active-site Proton acceptor is glutamate 1265.

The protein belongs to the xanthine dehydrogenase family. In terms of assembly, aldehyde oxidases (AO) are homodimers and heterodimers of AO subunits. The cofactor is [2Fe-2S] cluster. FAD serves as cofactor. It depends on Mo-molybdopterin as a cofactor. In terms of tissue distribution, transcripts expressed at high levels in developing siliques and at low levels in dry seeds.

The protein localises to the cytoplasm. The enzyme catalyses indole-3-acetaldehyde + O2 + H2O = (indol-3-yl)acetate + H2O2 + H(+). It catalyses the reaction an aldehyde + O2 + H2O = a carboxylate + H2O2 + H(+). The catalysed reaction is benzaldehyde + O2 + H2O = benzoate + H2O2 + H(+). It carries out the reaction hexanal + O2 + H2O = hexanoate + H2O2 + H(+). The enzyme catalyses 1-naphthaldehyde + O2 + H2O = 1-naphthoate + H2O2 + H(+). It catalyses the reaction vanillin + O2 + H2O = vanillate + H2O2 + H(+). The catalysed reaction is malonaldehyde + O2 + H2O = 3-oxopropanoate + H2O2 + H(+). It carries out the reaction citral + O2 + H2O = 3,7-dimethylocta-2,6-dienoate + H2O2 + H(+). The enzyme catalyses acrolein + O2 + H2O = acrylate + H2O2 + H(+). It catalyses the reaction (E)-4-hydroxynon-2-enal + O2 + H2O = (E)-4-hydroxynon-2-enoate + H2O2 + H(+). The catalysed reaction is (E)-cinnamaldehyde + O2 + H2O = (E)-cinnamate + H2O2 + H(+). It carries out the reaction indole-3-carbaldehyde + O2 + H2O = indole-3-carboxylate + H2O2 + H(+). The enzyme catalyses propanal + O2 + H2O = propanoate + H2O2 + H(+). It catalyses the reaction dodecanal + O2 + H2O = dodecanoate + H2O2 + H(+). The catalysed reaction is salicylaldehyde + O2 + H2O = salicylate + H2O2 + H(+). With respect to regulation, inhibited by Cu(2+). Functionally, aldehyde oxidase with a broad substrate specificity. Involved in the accumulation of benzoic acid (BA) in siliques. Delays and protects siliques from senescence by catalyzing aldehyde detoxification in siliques. Catalyzes the oxidation of an array of aromatic and aliphatic aldehydes, including vanillin and the reactive carbonyl species (RCS) acrolein, 4-hydroxyl-2-nonenal (HNE), and malondialdehyde (MDA). The protein is Aldehyde oxidase 4 of Arabidopsis thaliana (Mouse-ear cress).